Consider the following 470-residue polypeptide: MAANGKVVSEMIAWIKSQKLIAPRMKDAPTFYRNLEEALDVRRSTQSLMTRGQSTWKTGDAIDFCSNDLLSLGLTGELRREFLAELARHPDFSLHSGGSRVMGGNYDYIEAVEQEIADFLGAETALMFNSGSNGNIAIYTAIPRPGDAIVYDELVHFSTHTGMAASLATTKVAFRHNDLDAFREAMSSTMDSHPMLQDGSRSILVSVESVYSMDGDVCPLVEMLEIAREICPKGNFAFIADEAHATGVVGPRGVGLVKLLGLENEVAIRLNTCGKALACTGSVVLGNATVRNMLLNYAGSLVNTTAPSFPSVAVIRAAYNLMRTGATQKAQDNIQHLVKYFFESITSSNIWDKATDLGILSIPVAEDYESLDFVTHIVPIWTRQKYNWWLFFHLQLAKIAVVPIDYPQVPKGKSRVRVMIHAGNTEEQVDYLVATLCDFANEMIDIEEGGEKGKIPKAAQEIYALMAAHA.

Ser-212, His-244, and Thr-272 together coordinate pyridoxal 5'-phosphate. Lys-275 is modified (N6-(pyridoxal phosphate)lysine).

It belongs to the class-II pyridoxal-phosphate-dependent aminotransferase family. BioF subfamily. In terms of assembly, homodimer. The cofactor is pyridoxal 5'-phosphate.

The enzyme catalyses aminomalonate + (3R)-hydroxyoctadeca-4,10-dienoyl-[ACP] = 3-oxopresphingofungin + holo-[ACP] + CO2. The protein operates within secondary metabolite biosynthesis. Functionally, aminoacyl transferase; part of the gene cluster that mediates the biosynthesis of sphingofungins, bioactive molecules acting as sphingolipid inhibitors via inhibiting serine palmitoyl transferase (SPT). Within the pathway, sphA transfers aminomalonate onto the sphB product 3-hydroxyoctadeca-4,10-dienoyl-ACP to produce 3-keto-presphingofungin. The substrate specificity of sphA using only aminomalonate in Aspergillus fumigatus is responsible for the biosynthesis of sphingofungins B and C but not E and F like in Byssochlamys spectabilis. The PKS sphB does not contain any putative thioesterase domain for releasing the nascent polyketide chain and it has been suggested that aminoacyl transferases can facilitate the polyketide chain release. Sphingofungin biosynthesis starts with the PKS sphB that produces an C18 polyketide precursor 3-hydroxyoctadeca-4,10-dienoyl-ACP containing one delta-6 desaturation and one delta-12 desaturation. The aminoacyl transferase sphA uses the sphB product to produce 3-keto-presphingofungin by adding an aminomalonate molecule. SphF then reduces the C-3 ketone of 3-keto-presphingofungin which leads to presphingofungin. The cytochrome P450 monooxygenase sphH converts presphingofungin into sphingofungin B1 which is further converted to sphingofungin B by the dioxygenase sphC. SphC is also able to convert presphingofungin into sphingofungin B2. The acetyltransferase sphE acetylates sphingofungin B to produce sphingofungin C, but can also convert sphingofungin B1 into sphingofungin C1 and sphingofungin B2 into sphingofungin C2. Finally, sphingofungin C can be spontaneously converted into sphingofungin D. The sequence is that of Aminoacyl transferase sphA from Aspergillus fumigatus (strain CBS 144.89 / FGSC A1163 / CEA10) (Neosartorya fumigata).